The sequence spans 1141 residues: Envelopment polyprotein (1141 aa).

The first 19 residues, 1 to 19 (MFCLCLSLLGLLLCWPAAT), serve as a signal peptide directing secretion. Topologically, residues 20 to 489 (RNLLELKVEC…CVPGLHGWAT (470 aa)) are lumenal. Disulfide bonds link C29/C154, C63/C160, C112/C131, C136/C141, C178/C188, and C213/C252. An N-linked (GlcNAc...) asparagine; by host glycan is attached at N137. N352 carries an N-linked (GlcNAc...) asparagine; by host glycan. 4 disulfide bridges follow: C381-C440, C385-C394, C410-C429, and C457-C480. The N-linked (GlcNAc...) asparagine; by host glycan is linked to N404. Residues 490-510 (ISLLITFCFGWLAIPLLSMII) form a helical membrane-spanning segment. The Cytoplasmic segment spans residues 511–632 (IRFLLIFTYL…LSMFRYKSKC (122 aa)). The binding to the ribonucleoprotein stretch occupies residues 521-538 (CSKYSTDSKFKLIIEKVK). CCHC-type zinc fingers lie at residues 550–570 (CEVC…KKSC) and 575–596 (CPYC…FKVC). Binding to the ribonucleoprotein stretches follow at residues 593 to 610 (FKVC…KKSL), 597 to 608 (KLTTRFQENLKK), and 616 to 630 (KRGL…RYKS). The interval 612–653 (TYEPKRGLYRTLSMFRYKSKCYVGLVWCILLTMELIVWAASA) is inhibition of interferon induction. The region spanning 616 to 639 (KRGLYRTLSMFRYKSKCYVGLVWC) is the ITAM domain. Phosphotyrosine occurs at positions 620 and 633. Positions 620 to 623 (YRTL) match the YxxL motif. Residues 633–653 (YVGLVWCILLTMELIVWAASA) form a helical membrane-spanning segment. The Lumenal segment spans residues 654-1109 (ETINLEPGWT…EWLLGILSGN (456 aa)). 8 disulfides stabilise this stretch: C740/C775, C744/C782, C756/C889, C770/C900, C785/C908, C811/C820, C828/C837, and C868/C872. Residues 762 to 782 (FEFETGWGCNPPDCPGVGTGC) form a fusion loop region. N932 is a glycosylation site (N-linked (GlcNAc...) asparagine; by host). 5 cysteine pairs are disulfide-bonded: C974-C1004, C997-C1049, C1014-C1019, C1050-C1055, and C1089-C1093. A helical transmembrane segment spans residues 1110–1130 (WMVVAVLIALFIFSLLLFSLC). The interval 1126–1141 (LFSLCCPRRQNYKKNK) is binding to the ribonucleoprotein. Topologically, residues 1131–1141 (CPRRQNYKKNK) are cytoplasmic.

This sequence belongs to the hantavirus envelope glycoprotein family. Homodimer. Homotetramer; forms heterotetrameric Gn-Gc spikes in the pre-fusion conformation. Interacts (via C-terminus) with the nucleoprotein. Interacts with host TUFM; this interaction contributes to the virus-induced degradation of mitochondria by autophagy, which leads to degradation of host MAVS and inhibition of type I interferon (IFN) responses. Interacts with host MAP1LC3B; this interaction contributes to the virus-induced degradation of mitochondria by autophagy, which leads to degradation of host MAVS and inhibition of type I interferon (IFN) responses. As to quaternary structure, homodimer. Homotetramer; forms heterotetrameric Gn-Gc spikes in the pre-fusion conformation. Homotrimer; forms homotrimer in the post-fusion conformation at acidic pH. Interacts (via C-terminus) with the nucleoprotein. Envelope polyprotein precursor is quickly cleaved in vivo just after synthesis, presumably by host signal peptidase.

The protein localises to the virion membrane. Its subcellular location is the host cell surface. It is found in the host Golgi apparatus membrane. It localises to the host endoplasmic reticulum membrane. The protein resides in the host mitochondrion. Its function is as follows. Forms homotetramers with glycoprotein C at the surface of the virion. Attaches the virion to host cell receptors including integrin alpha5/ITGB1. This attachment induces virion internalization predominantly through clathrin-dependent endocytosis. Mediates the assembly and budding of infectious virus particles through its interaction with the nucleocapsid protein and the viral genome. May dysregulate normal immune and endothelial cell responses through an ITAM motif. Translocates to mitochondria, binds to host TUFM and recruits MAP1LC3B. These interactions induce mitochondrial autophagy and therefore destruction of host MAVS leading to inhibition of type I interferon (IFN) responses. Concomitant breakdown of glycoprotein N is apparently prevented by the nucleoprotein that may inhibit Gn-stimulated autophagosome-lysosome fusion. Interacts with the viral genomic RNA. Inhibits the host RIG-I/TBK1 pathway by disrupting the formation of TBK1-TRAF3 complexes and downstream signaling responses required for IFN-beta transcription. Forms homotetramers with glycoprotein N at the surface of the virion. Attaches the virion to host cell receptors including integrin ITGAV/ITGB3. This attachment induces virion internalization predominantly through clathrin-dependent endocytosis. Class II fusion protein that promotes fusion of viral membrane with host endosomal membrane after endocytosis of the virion. The sequence is that of Envelopment polyprotein (GP) from Tula orthohantavirus (TULV).